The primary structure comprises 360 residues: MTPILRLLLLSSLLSCWKQSVVGANSWWSLALNPVQRPEMFIIGAQPLCSQLTGLSPGQRKLCQLYQDHMVHIGEGAKTGIKECQHQFKHRRWNCSTVDNNSVFGRVMQIGSREAAFTYAISSAGVVNAISRACREGELSTCGCSRTPRPKDLPRDWLWGGCGDNVEYGYRFAKEFVDAREREKNFPKGSEEQARSLMNLQNNEAGRRAVYKLADVACKCHGVSGSCSLKTCWLQLADFRKVGEYIKEKYDSAASMRLNKRNKLEQVNQRFNPPTGEDLVYLDPSPDYCLYNETTGSLGTHGRQCNKTSEGMDGCELMCCGRGYDQFKTVQVERCHCKFQWCCFVKCKKCTEIVDQFVCK.

Residues 1 to 16 (MTPILRLLLLSSLLSC) form the signal peptide. Cysteines 84 and 95 form a disulfide. N-linked (GlcNAc...) asparagine glycosylation is found at asparagine 94 and asparagine 100. 10 disulfide bridges follow: cysteine 134-cysteine 142, cysteine 144-cysteine 162, cysteine 218-cysteine 232, cysteine 220-cysteine 227, cysteine 289-cysteine 320, cysteine 305-cysteine 315, cysteine 319-cysteine 359, cysteine 335-cysteine 350, cysteine 337-cysteine 347, and cysteine 342-cysteine 343. Serine 224 is lipidated: O-palmitoleoyl serine; by PORCN. N-linked (GlcNAc...) asparagine glycosylation is found at asparagine 292 and asparagine 306.

The protein belongs to the Wnt family. Post-translationally, palmitoleoylation is required for efficient binding to frizzled receptors. Depalmitoleoylation leads to Wnt signaling pathway inhibition.

It localises to the secreted. Its subcellular location is the extracellular space. The protein resides in the extracellular matrix. In terms of biological role, ligand for members of the frizzled family of seven transmembrane receptors. Probable developmental protein. May be a signaling molecule which affects the development of discrete regions of tissues. Is likely to signal over only few cell diameters. The chain is Protein Wnt-5b (wnt5b) from Xenopus laevis (African clawed frog).